Here is a 279-residue protein sequence, read N- to C-terminus: Type II iodothyronine deiodinase (279 aa).

Over 1-7 the chain is Lumenal; that stretch reads MGLLSAD. A helical; Signal-anchor for type III membrane protein transmembrane segment spans residues 8–28; it reads LLITLQILPVFFSNCLFLALY. The Cytoplasmic portion of the chain corresponds to 29–279; that stretch reads DSVILLKHMV…TEDLSTDVSL (251 aa). Sec-132 is a catalytic residue. 2 non-standard amino acids (selenocysteine) are found at residues Sec-132 and Sec-265.

This sequence belongs to the iodothyronine deiodinase family. As to quaternary structure, predominantly monomer. Can form homodimers but homodimerization is not essential for enzyme activity. As to expression, highly expressed in liver and in various parts of the brain including telencephalon, hippocampus, cerebellum, and brain stem, and weakly expressed in thyroid, lung, and small intestine. Not detected in skeletal muscle, heart atria or ventricle, gizzard or kidney.

It is found in the endoplasmic reticulum membrane. The enzyme catalyses 3,3',5-triiodo-L-thyronine + iodide + A + H(+) = L-thyroxine + AH2. The catalysed reaction is 3,3'-diiodo-L-thyronine + iodide + A + H(+) = 3,3',5'-triiodo-L-thyronine + AH2. It catalyses the reaction 3'-iodo-L-thyronine + iodide + A + H(+) = 3',5'-diiodo-L-thyronine + AH2. It carries out the reaction 3,3'-diiodothyronamine + iodide + A + H(+) = 3,3',5'-triiodothyronamine + AH2. The enzyme catalyses 3'-iodothyronamine + iodide + A + H(+) = 3',5'-diiodothyronamine + AH2. Its activity is regulated as follows. Not inhibited by N(6)-propylthiouracil. Functionally, plays a crucial role in the metabolism of thyroid hormones (TH) and has specific roles in TH activation and inactivation by deiodination. Catalyzes the deiodination of L-thyroxine (T4) to 3,5,3'-triiodothyronine (T3) and 3,3',5'-triiodothyronine (rT3) to 3,3'-diiodothyronine (3,3'-T2) via outer-ring deiodination (ORD). Catalyzes the deiodination of 3',5'-diiodothyronine (3',5'-T2) to 3'-monoiodothyronine (3'-T1) via ORD. Catalyzes the phenolic ring deiodinations of 3,3',5'-triiodothyronamine and 3',5'- diiodothyronamine. In Gallus gallus (Chicken), this protein is Type II iodothyronine deiodinase (DIO2).